A 237-amino-acid polypeptide reads, in one-letter code: CD63 antigen (237 aa).

The Cytoplasmic portion of the chain corresponds to 1 to 11 (MAVEGGMKCVK). The chain crosses the membrane as a helical span at residues 12 to 32 (FLLYVLLLVFCACAVGLIAVG). Residues 33–51 (VGTHLVLNQTITHGATPSF) lie on the Extracellular side of the membrane. Asparagine 40 carries N-linked (GlcNAc...) asparagine glycosylation. A helical membrane pass occupies residues 52-72 (LLPVVIIAVGAFLFLVAFVGC). Residues 73-81 (CGACKENYC) are Cytoplasmic-facing. The helical transmembrane segment at 82–102 (LMITFAIFLSLIMLVEVAAAI) threads the bilayer. The Extracellular portion of the chain corresponds to 103-202 (AGYVFRDKVR…KIAAWLRKNV (100 aa)). Asparagine 130, asparagine 150, and asparagine 171 each carry an N-linked (GlcNAc...) asparagine glycan. A helical transmembrane segment spans residues 203–223 (LVVAAAALGIAFVEILGIVLA). At 224-237 (CCLVKSIRSGYEVM) the chain is on the cytoplasmic side. Positions 233 to 237 (GYEVM) match the Lysosomal targeting motif motif.

It belongs to the tetraspanin (TM4SF) family. In terms of assembly, interacts with TIMP1 and ITGB1 and recruits TIMP1 to ITGB1. Interacts with CD9. Identified in a complex with CD9 and ITGB3. Interacts with PMEL. Interacts with KDR/VEGFR2; identified in a complex with ITGB1 and KDR/VEGFR2 and is required to recruit KDR to ITGB1 complexes. Interacts with SYT7. Palmitoylated at a low, basal level in unstimulated platelets. The level of palmitoylation increases when platelets are activated by thrombin (in vitro).

The protein resides in the cell membrane. It is found in the lysosome membrane. Its subcellular location is the late endosome membrane. The protein localises to the endosome. It localises to the multivesicular body. The protein resides in the melanosome. It is found in the secreted. Its subcellular location is the extracellular exosome. The protein localises to the cell surface. Functionally, functions as a cell surface receptor for TIMP1 and plays a role in the activation of cellular signaling cascades. Plays a role in the activation of ITGB1 and integrin signaling, leading to the activation of AKT, FAK/PTK2 and MAP kinases. Promotes cell survival, reorganization of the actin cytoskeleton, cell adhesion, spreading and migration, via its role in the activation of AKT and FAK/PTK2. Plays a role in VEGFA signaling via its role in regulating the internalization of KDR/VEGFR2. Plays a role in intracellular vesicular transport processes, and is required for normal trafficking of the PMEL luminal domain that is essential for the development and maturation of melanocytes. Plays a role in the adhesion of leukocytes onto endothelial cells via its role in the regulation of SELP trafficking. May play a role in mast cell degranulation in response to Ms4a2/FceRI stimulation, but not in mast cell degranulation in response to other stimuli. This Bos taurus (Bovine) protein is CD63 antigen (CD63).